The primary structure comprises 355 residues: uncharacterized protein (355 aa).

Residues 6-26 (LLTPYFLLSILSVGVFTATAA) traverse the membrane as a helical segment.

It belongs to the SUN family.

It localises to the membrane. This is an uncharacterized protein from Saccharomyces cerevisiae (strain ATCC 204508 / S288c) (Baker's yeast).